Reading from the N-terminus, the 415-residue chain is Esterase FrsA (415 aa).

It belongs to the FrsA family. Monomer in solution. Homodimer. Forms a 1:1 complex with the unphosphorylated form of the EIIA component of the glucose-specific PTS system (IIAGlc).

It catalyses the reaction a carboxylic ester + H2O = an alcohol + a carboxylate + H(+). In terms of biological role, catalyzes the hydrolysis of esters. In vitro, prefers short chain alkanoate ester as substrate. Displays highest activity towards p-nitrophenyl acetate (pNPA). Has weaker activity towards p-nitrophenyl butyrate (pNPB). The polypeptide is Esterase FrsA (Vibrio vulnificus (strain CMCP6)).